The following is a 404-amino-acid chain: Argininosuccinate synthase (404 aa).

An ATP-binding site is contributed by 15–23 (AYSGGLDTS). Y94 serves as a coordination point for L-citrulline. Residue G124 coordinates ATP. L-aspartate contacts are provided by T126, N130, and D131. N130 contacts L-citrulline. Residues R134, S182, E266, and Y278 each coordinate L-citrulline.

Belongs to the argininosuccinate synthase family. Type 1 subfamily. In terms of assembly, homotetramer.

Its subcellular location is the cytoplasm. The enzyme catalyses L-citrulline + L-aspartate + ATP = 2-(N(omega)-L-arginino)succinate + AMP + diphosphate + H(+). Its pathway is amino-acid biosynthesis; L-arginine biosynthesis; L-arginine from L-ornithine and carbamoyl phosphate: step 2/3. This Streptomyces avermitilis (strain ATCC 31267 / DSM 46492 / JCM 5070 / NBRC 14893 / NCIMB 12804 / NRRL 8165 / MA-4680) protein is Argininosuccinate synthase.